Consider the following 650-residue polypeptide: uncharacterized protein (650 aa).

This is an uncharacterized protein from Caenorhabditis elegans.